Here is a 333-residue protein sequence, read N- to C-terminus: Acyl-CoA wax alcohol acyltransferase 2 (333 aa).

A run of 3 helical transmembrane segments spans residues 15-35, 38-58, and 130-150; these read VFAL…VIIV, YLVV…WLAF, and TFPG…VPFL.

It belongs to the diacylglycerol acyltransferase family. Monomer. In terms of tissue distribution, expressed in Mueller cells of the retina (at protein level). Abundant in tissues rich in sebaceous glands such as the preputial gland and eyelid.

It is found in the endoplasmic reticulum membrane. The enzyme catalyses a long chain fatty alcohol + a fatty acyl-CoA = a wax ester + CoA. The catalysed reaction is all-trans-retinol + an acyl-CoA = an all-trans-retinyl ester + CoA. It catalyses the reaction an acyl-CoA + a 1,2-diacyl-sn-glycerol = a triacyl-sn-glycerol + CoA. It carries out the reaction 9-cis-retinol + a fatty acyl-CoA = 9-cis-retinyl ester + CoA. The enzyme catalyses 11-cis-retinol + a fatty acyl-CoA = 11-cis-retinyl ester + CoA. The catalysed reaction is 13-cis-retinol + a fatty acyl-CoA = 13-cis-retinyl ester + CoA. It catalyses the reaction a 1-acylglycerol + an acyl-CoA = a 1,2-diacylglycerol + CoA. It carries out the reaction 1-O-alkylglycerol + an acyl-CoA = 1-O-alkyl-3-acylglycerol + CoA. The enzyme catalyses a 2-acylglycerol + an acyl-CoA = a 1,2-diacyl-sn-glycerol + CoA. The catalysed reaction is 2-(9Z-octadecenoyl)-glycerol + hexadecanoyl-CoA = 1-hexadecanoyl-2-(9Z-octadecenoyl)-sn-glycerol + CoA. It catalyses the reaction 1,2-di-(9Z-octadecenoyl)-sn-glycerol + hexadecanoyl-CoA = 1,2-di-(9Z)-octadecenoyl-3-hexadecanoyl-sn-glycerol + CoA. It carries out the reaction hexadecan-1-ol + hexadecanoyl-CoA = hexadecanyl hexadecanoate + CoA. The enzyme catalyses hexadecane-1,2-diol + hexadecanoyl-CoA = 2-hydroxyhexadecyl hexadecanoate + CoA. The catalysed reaction is all-trans-retinol + hexadecanoyl-CoA = all-trans-retinyl hexadecanoate + CoA. It catalyses the reaction 1,2-di-(9Z-octadecenoyl)-sn-glycerol + (9Z)-octadecenoyl-CoA = 1,2,3-tri-(9Z-octadecenoyl)-glycerol + CoA. It carries out the reaction hexadecan-1-ol + (9Z)-octadecenoyl-CoA = hexadecanyl (9Z)-octadecenoate + CoA. The enzyme catalyses (9Z)-hexadecen-1-ol + (9Z)-octadecenoyl-CoA = 1-O-(9Z)-hexadecenyl (9Z)-octadecenoate + CoA. The catalysed reaction is octadecan-1-ol + (9Z)-octadecenoyl-CoA = 1-O-octadecyl (9Z)-octadecenoate + CoA. It catalyses the reaction (9Z)-octadecen-1-ol + (9Z)-octadecenoyl-CoA = 1-O-(9Z)-octadecenyl (9Z)-octadecenoate + CoA. It carries out the reaction hexadecan-1-ol + (9Z)-hexadecenoyl-CoA = 1-O-hexadecyl (9Z)-hexadecenoate + CoA. The enzyme catalyses hexadecan-1-ol + octadecanoyl-CoA = hexadecanyl octadecanoate + CoA. The catalysed reaction is 11-cis-retinol + hexadecanoyl-CoA = 11-cis-retinyl hexadecanoate + CoA. It catalyses the reaction 1-O-(9Z-octadecenyl)-glycerol + (9Z)-octadecenoyl-CoA = 1-O-(9Z-octadecyl)-3-(9Z-octadecenoyl)-glycerol + CoA. It carries out the reaction 1-(9Z-octadecenoyl)-glycerol + (9Z)-octadecenoyl-CoA = 1,2-di-(9Z-octadecenoyl)-glycerol + CoA. The enzyme catalyses 11-cis-retinol + tetradecanoyl-CoA = 11-cis-retinyl tetradecanoate + CoA. The catalysed reaction is 9-cis-retinol + tetradecanoyl-CoA = 9-cis-retinyl tetradecanoate + CoA. It catalyses the reaction 9-cis-retinol + hexadecanoyl-CoA = 9-cis-retinyl hexadecanoate + CoA. It carries out the reaction 13-cis-retinol + tetradecanoyl-CoA = 13-cis-retinyl tetradecanoate + CoA. The enzyme catalyses all-trans-retinol + tetradecanoyl-CoA = all-trans-retinyl tetradecanoate + CoA. The catalysed reaction is tetradecan-1-ol + tetradecanoyl-CoA = tetradecanyl tetradecanoate + CoA. With respect to regulation, 11-cis retinoids act as allosteric modulators of acyl-CoA retinol O-fatty-acyltransferase (ARAT) activity by suppressing esterification of 9-cis, 13-cis, or all-trans retinols concurrently increasing the enzyme specificity toward 11-cis isomer. Its function is as follows. Acyltransferase that catalyzes the formation of ester bonds between fatty alcohols and fatty acyl-CoAs to form wax monoesters. Shows a preference for medium chain acyl-CoAs from C12 to C16 in length and fatty alcohols shorter than C20, as the acyl donor and acceptor, respectively. Also possesses fatty acyl-CoA retinol acyltransferase (ARAT) activity that preferentially esterifies 11-cis-retinol, a chromophore precursor of bleached opsin pigments in cone cells. Shows higher catalytic efficiency toward 11-cis-retinol versus 9-cis-retinol, 13- cis-retinol and all-trans-retinol substrates. The protein is Acyl-CoA wax alcohol acyltransferase 2 (Awat2) of Mus musculus (Mouse).